Consider the following 64-residue polypeptide: MAKAKGARIIITLECTECRTNVNKRSPGVNRYTTTKNRRNTTARLELKKFCPKCNRHTVHKEIK.

This sequence belongs to the bacterial ribosomal protein bL33 family.

This chain is Large ribosomal subunit protein bL33, found in Synechococcus sp. (strain JA-3-3Ab) (Cyanobacteria bacterium Yellowstone A-Prime).